The sequence spans 168 residues: NADH-ubiquinone oxidoreductase chain 6 (168 aa).

5 helical membrane-spanning segments follow: residues Met-1 to Ala-21, Ile-27 to Leu-47, Val-50 to Tyr-70, Val-87 to Ser-107, and Trp-143 to Val-163.

This sequence belongs to the complex I subunit 6 family. In terms of assembly, core subunit of respiratory chain NADH dehydrogenase (Complex I) which is composed of 45 different subunits.

The protein resides in the mitochondrion inner membrane. The enzyme catalyses a ubiquinone + NADH + 5 H(+)(in) = a ubiquinol + NAD(+) + 4 H(+)(out). Core subunit of the mitochondrial membrane respiratory chain NADH dehydrogenase (Complex I) which catalyzes electron transfer from NADH through the respiratory chain, using ubiquinone as an electron acceptor. Essential for the catalytic activity and assembly of complex I. The chain is NADH-ubiquinone oxidoreductase chain 6 (MT-ND6) from Didelphis virginiana (North American opossum).